The chain runs to 363 residues: 3-isopropylmalate dehydrogenase (363 aa).

78 to 91 (GPKWEHLPPAEQPE) contributes to the NAD(+) binding site. Substrate is bound by residues R99, R109, R138, and D227. Mg(2+) contacts are provided by D227, D251, and D255. An NAD(+)-binding site is contributed by 285–297 (GSAPDIAGKNIAN).

It belongs to the isocitrate and isopropylmalate dehydrogenases family. LeuB type 1 subfamily. As to quaternary structure, homodimer. It depends on Mg(2+) as a cofactor. Mn(2+) is required as a cofactor.

Its subcellular location is the cytoplasm. It catalyses the reaction (2R,3S)-3-isopropylmalate + NAD(+) = 4-methyl-2-oxopentanoate + CO2 + NADH. It participates in amino-acid biosynthesis; L-leucine biosynthesis; L-leucine from 3-methyl-2-oxobutanoate: step 3/4. Its function is as follows. Catalyzes the oxidation of 3-carboxy-2-hydroxy-4-methylpentanoate (3-isopropylmalate) to 3-carboxy-4-methyl-2-oxopentanoate. The product decarboxylates to 4-methyl-2 oxopentanoate. This Yersinia pestis protein is 3-isopropylmalate dehydrogenase.